The chain runs to 429 residues: MDVQETTAACRDAFAELASPACIHDPYPFMRWLREHDPVHRAASGLFLLSRHADIFWAFKATGDAFRGPAPGELARYFSRAATSPSLNLLASTLAMKDPPTHTRLRRLISRDFTMGQIDNLRPSIARIVAARLDGITPALERGEAVDLHREFALALPMLVFAELFGMPQDDMFELAAGIGTILEGLGPHASDPQLAAADAASARVQAYFGDLIQRKRTDPRRDIVSMLVGAHDDDADTLSDAELISMLWGMLLGGFVTTAASIDHAVLAMLAYPEQRHWLQADAARVRAFVEEVLRCDAPAMFSSIPRIAQRDIELGGVVIPKNADVRVLIASGNRDPDAFADPDRFDPARFYGTSPGMSTDGKIMLSFGHGIHFCLGAQLARVQLAESLPRIQARFPTLAFAGQPTREPSAFLRTFRTLPVRLHAQGS.

A heme-binding site is contributed by cysteine 376.

This sequence belongs to the cytochrome P450 family. The cofactor is heme.

Cytochromes P450 are a group of heme-thiolate monooxygenases. They oxidize a variety of structurally unrelated compounds, including steroids, fatty acids, and xenobiotics. The sequence is that of Cytochrome P450 BJ-3 (cyp114) from Bradyrhizobium diazoefficiens (strain JCM 10833 / BCRC 13528 / IAM 13628 / NBRC 14792 / USDA 110).